Here is a 398-residue protein sequence, read N- to C-terminus: MARNIKVEELFQTPVEKQRIELVERKGIGHPDSISDGLAEAVSRALCREYISKCGAVLHHNTDETQIVAGRSSPRFGGGEILQPIYILLVGRATKEFEGVDLATESVALQAARQYLKNTLVNMDLERDVIMDCKLGTGSSDLRDVFKRDRIPVANDTSFGVGHAPFSELENLVYNTERQLLTDLKSRMPGIGEDMKVMGLRDGEDITLTICSGMIGRYIDDLDSYINMTQEMQTYVEEMATRYTERNVKVCINTGDNLKTSSIFLTVTGTSAEMGDDGSVGRGNRCNGLITPNRPMSMEATSGKNPINHIGKIYNLLSTQMARDIVKQVPEVQDVYIRLLSQIGKPIDQPLVASAQVIPKEGTSFAKVKAEAEVVMDDWLSNVTKITEMVIKGELDTF.

136-141 (GTGSSD) is an ATP binding site.

It belongs to the AdoMet synthase 2 family. The cofactor is Mg(2+).

The catalysed reaction is L-methionine + ATP + H2O = S-adenosyl-L-methionine + phosphate + diphosphate. Its pathway is amino-acid biosynthesis; S-adenosyl-L-methionine biosynthesis; S-adenosyl-L-methionine from L-methionine: step 1/1. Catalyzes the formation of S-adenosylmethionine from methionine and ATP. The chain is S-adenosylmethionine synthase from Methanosarcina barkeri (strain Fusaro / DSM 804).